A 356-amino-acid polypeptide reads, in one-letter code: UDP-3-O-acylglucosamine N-acyltransferase (356 aa).

His242 acts as the Proton acceptor in catalysis.

The protein belongs to the transferase hexapeptide repeat family. LpxD subfamily. In terms of assembly, homotrimer.

It carries out the reaction a UDP-3-O-[(3R)-3-hydroxyacyl]-alpha-D-glucosamine + a (3R)-hydroxyacyl-[ACP] = a UDP-2-N,3-O-bis[(3R)-3-hydroxyacyl]-alpha-D-glucosamine + holo-[ACP] + H(+). The protein operates within bacterial outer membrane biogenesis; LPS lipid A biosynthesis. Its function is as follows. Catalyzes the N-acylation of UDP-3-O-acylglucosamine using 3-hydroxyacyl-ACP as the acyl donor. Is involved in the biosynthesis of lipid A, a phosphorylated glycolipid that anchors the lipopolysaccharide to the outer membrane of the cell. This is UDP-3-O-acylglucosamine N-acyltransferase from Acinetobacter baylyi (strain ATCC 33305 / BD413 / ADP1).